A 430-amino-acid polypeptide reads, in one-letter code: Adenylosuccinate synthetase (430 aa).

GTP-binding positions include 12-18 (GDEGKGK) and 40-42 (GHT). Aspartate 13 (proton acceptor) is an active-site residue. The Mg(2+) site is built by aspartate 13 and glycine 40. Residues 13–16 (DEGK), 38–41 (NAGH), threonine 128, arginine 142, glutamine 223, threonine 238, and arginine 302 each bind IMP. The Proton donor role is filled by histidine 41. Substrate is bound at residue 298–304 (TTTGRPR). GTP-binding positions include arginine 304, 330-332 (SID), and 412-414 (SVG).

The protein belongs to the adenylosuccinate synthetase family. As to quaternary structure, homodimer. It depends on Mg(2+) as a cofactor.

The protein resides in the cytoplasm. It catalyses the reaction IMP + L-aspartate + GTP = N(6)-(1,2-dicarboxyethyl)-AMP + GDP + phosphate + 2 H(+). It participates in purine metabolism; AMP biosynthesis via de novo pathway; AMP from IMP: step 1/2. In terms of biological role, plays an important role in the de novo pathway of purine nucleotide biosynthesis. Catalyzes the first committed step in the biosynthesis of AMP from IMP. This is Adenylosuccinate synthetase from Streptococcus pyogenes serotype M3 (strain ATCC BAA-595 / MGAS315).